We begin with the raw amino-acid sequence, 778 residues long: Subtilisin-like protease SBT3.6 (778 aa).

The signal sequence occupies residues 1 to 22; it reads MMNYRTSIYVVLSLVIFLNVQR. Positions 23–113 are cleaved as a propeptide — activation peptide; it reads SFVAESSAKR…VIPDSFYKLA (91 aa). Residues 34–113 form the Inhibitor I9 domain; that stretch reads VHIVYLGEKQ…VIPDSFYKLA (80 aa). An N-linked (GlcNAc...) asparagine glycan is attached at N69. One can recognise a Peptidase S8 domain in the interval 117–625; sequence TWDYLGLSAA…GGLVNPEKSA (509 aa). The active-site Charge relay system is D147. N-linked (GlcNAc...) asparagine glycans are attached at residues N158, N180, N202, and N206. The Charge relay system role is filled by H222. N-linked (GlcNAc...) asparagine glycosylation is found at N237, N399, N414, and N541. One can recognise a PA domain in the interval 388–483; it reads SLVYPENPGN…ELGTDILLYT (96 aa). Catalysis depends on S556, which acts as the Charge relay system. N-linked (GlcNAc...) asparagine glycans are attached at residues N648, N724, and N759.

The protein belongs to the peptidase S8 family.

Its subcellular location is the secreted. The polypeptide is Subtilisin-like protease SBT3.6 (Arabidopsis thaliana (Mouse-ear cress)).